The following is a 532-amino-acid chain: Metal-staphylopine-binding protein CntA (532 aa).

A signal peptide spans 1-20 (MRKLTKMSAMLLASGLILTG). C21 carries the N-palmitoyl cysteine lipid modification. The S-diacylglycerol cysteine moiety is linked to residue C21. Residues R165, R418, and N448 each contribute to the staphylopine site.

It belongs to the bacterial solute-binding protein 5 family. The complex is composed of two ATP-binding proteins (CntD and CntF), two transmembrane proteins (CntB and CntC) and a solute-binding protein (CntA).

It localises to the cell membrane. In terms of biological role, part of the ABC transporter complex CntABCDF (Opp1) involved in the uptake of metal in complex with the metallophore staphylopine (StP). May be involved in the import of a large array of divalent metals ions such as nickel, cobalt, zinc, copper and iron. Binds the metal via the metallophore StP, and transfers the StP-metal complex to the membrane-bound permease. The polypeptide is Metal-staphylopine-binding protein CntA (Staphylococcus aureus (strain Mu50 / ATCC 700699)).